The following is a 466-amino-acid chain: Phytase A (466 aa).

The N-terminal stretch at 1–19 (MGFLAIVLSVALLFRSTSG) is a signal peptide. A disulfide bridge links C31 with C40. 5 residues coordinate 1D-myo-inositol hexakisphosphate: Y51, R81, H82, R85, and T88. 4 disulfide bridges follow: C71-C414, C215-C465, C264-C282, and C436-C444. The Nucleophile role is filled by H82. N120 carries an N-linked (GlcNAc...) asparagine glycan. R165 is a binding site for 1D-myo-inositol hexakisphosphate. N-linked (GlcNAc...) asparagine glycans are attached at residues N207 and N230. K301 contacts 1D-myo-inositol hexakisphosphate. N339 and N352 each carry an N-linked (GlcNAc...) asparagine glycan. 1D-myo-inositol hexakisphosphate is bound by residues H361 and D362. The N-linked (GlcNAc...) asparagine glycan is linked to N376.

The protein belongs to the histidine acid phosphatase family. Monomer.

The protein resides in the secreted. It carries out the reaction 1D-myo-inositol hexakisphosphate + H2O = 1D-myo-inositol 1,2,4,5,6-pentakisphosphate + phosphate. It catalyses the reaction 1D-myo-inositol 1,2,4,5,6-pentakisphosphate + H2O = 1D-myo-inositol 1,2,5,6-tetrakisphosphate + phosphate. The enzyme catalyses 1D-myo-inositol 1,2,5,6-tetrakisphosphate + H2O = 1D-myo-inositol 1,2,6-trisphosphate + phosphate. The catalysed reaction is 1D-myo-inositol 1,2,6-trisphosphate + H2O = 1D-myo-inositol 1,2-bisphosphate + phosphate. It carries out the reaction 1D-myo-inositol 1,2-bisphosphate + H2O = 1D-myo-inositol 2-phosphate + phosphate. In terms of biological role, catalyzes the phosphate monoester hydrolysis of phytic acid (myo-inositol hexakisphosphate), which results in the stepwise formation of myo-inositol pentakis-, tetrakis-, tris-, bis-, and monophosphates, as well as the liberation of inorganic phosphate. Myo-inositol 2-monophosphate is the end product. Has a broad substrate specificity and is also able to dephosphorylate other classic acid phosphatase substrates such as p-nitrophenyl phosphate, phenyl phosphate, fructose 1,6-bisphosphate, glucose 6-phosphate, 3-phosphoglycerate, as well as ADP and ATP. The sequence is that of Phytase A from Aspergillus terreus.